Consider the following 525-residue polypeptide: GMP synthase [glutamine-hydrolyzing] (525 aa).

Residues 16-205 (PVLVVDFGAQ…LHDFAGLGAD (190 aa)) enclose the Glutamine amidotransferase type-1 domain. Cys93 (nucleophile) is an active-site residue. Catalysis depends on residues His179 and Glu181. A GMPS ATP-PPase domain is found at 206–399 (WTAANIAGVL…LGLPEEIVAR (194 aa)). 233–239 (SGGVDSA) lines the ATP pocket.

Homodimer.

It carries out the reaction XMP + L-glutamine + ATP + H2O = GMP + L-glutamate + AMP + diphosphate + 2 H(+). Its pathway is purine metabolism; GMP biosynthesis; GMP from XMP (L-Gln route): step 1/1. Catalyzes the synthesis of GMP from XMP. This Mycolicibacterium paratuberculosis (strain ATCC BAA-968 / K-10) (Mycobacterium paratuberculosis) protein is GMP synthase [glutamine-hydrolyzing].